A 90-amino-acid polypeptide reads, in one-letter code: Small ribosomal subunit protein bS16 (90 aa).

This sequence belongs to the bacterial ribosomal protein bS16 family.

In Geobacillus kaustophilus (strain HTA426), this protein is Small ribosomal subunit protein bS16.